The following is a 254-amino-acid chain: Dihydroorotate dehydrogenase B (NAD(+)), electron transfer subunit (254 aa).

In terms of domain architecture, FAD-binding FR-type spans Met1 to Ile99. FAD-binding positions include Arg50–Ser53, Leu67–Arg69, and Gly74–Thr75. Residues Cys218, Cys223, Cys226, and Cys241 each contribute to the [2Fe-2S] cluster site.

Belongs to the PyrK family. As to quaternary structure, heterotetramer of 2 PyrK and 2 PyrD type B subunits. It depends on [2Fe-2S] cluster as a cofactor. FAD serves as cofactor.

It participates in pyrimidine metabolism; UMP biosynthesis via de novo pathway; orotate from (S)-dihydroorotate (NAD(+) route): step 1/1. Responsible for channeling the electrons from the oxidation of dihydroorotate from the FMN redox center in the PyrD type B subunit to the ultimate electron acceptor NAD(+). The chain is Dihydroorotate dehydrogenase B (NAD(+)), electron transfer subunit from Listeria monocytogenes serotype 4a (strain HCC23).